The primary structure comprises 260 residues: Aliphatic sulfonates import ATP-binding protein SsuB 1 (260 aa).

Positions 29–243 constitute an ABC transporter domain; it reads VRVDGLTRSF…DITDPRFAEL (215 aa). Position 61-68 (61-68) interacts with ATP; it reads GRSGCGKS.

Belongs to the ABC transporter superfamily. Aliphatic sulfonates importer (TC 3.A.1.17.2) family. The complex is composed of two ATP-binding proteins (SsuB), two transmembrane proteins (SsuC) and a solute-binding protein (SsuA).

The protein localises to the cell membrane. It catalyses the reaction ATP + H2O + aliphatic sulfonate-[sulfonate-binding protein]Side 1 = ADP + phosphate + aliphatic sulfonateSide 2 + [sulfonate-binding protein]Side 1.. Part of the ABC transporter complex SsuABC involved in aliphatic sulfonates import. Responsible for energy coupling to the transport system. This chain is Aliphatic sulfonates import ATP-binding protein SsuB 1, found in Streptomyces avermitilis (strain ATCC 31267 / DSM 46492 / JCM 5070 / NBRC 14893 / NCIMB 12804 / NRRL 8165 / MA-4680).